The primary structure comprises 163 residues: 3-isopropylmalate dehydratase small subunit (163 aa).

The protein belongs to the LeuD family. LeuD type 2 subfamily. Heterodimer of LeuC and LeuD.

The enzyme catalyses (2R,3S)-3-isopropylmalate = (2S)-2-isopropylmalate. It functions in the pathway amino-acid biosynthesis; L-leucine biosynthesis; L-leucine from 3-methyl-2-oxobutanoate: step 2/4. In terms of biological role, catalyzes the isomerization between 2-isopropylmalate and 3-isopropylmalate, via the formation of 2-isopropylmaleate. In Thermococcus kodakarensis (strain ATCC BAA-918 / JCM 12380 / KOD1) (Pyrococcus kodakaraensis (strain KOD1)), this protein is 3-isopropylmalate dehydratase small subunit.